Reading from the N-terminus, the 152-residue chain is Superoxide dismutase [Cu-Zn] 4AP (152 aa).

Cu cation contacts are provided by His-45, His-47, and His-62. A disulfide bridge links Cys-56 with Cys-145. His-62, His-70, His-79, and Asp-82 together coordinate Zn(2+). His-119 contacts Cu cation.

Belongs to the Cu-Zn superoxide dismutase family. In terms of assembly, homodimer. Cu cation serves as cofactor. It depends on Zn(2+) as a cofactor.

It localises to the cytoplasm. It catalyses the reaction 2 superoxide + 2 H(+) = H2O2 + O2. In terms of biological role, destroys radicals which are normally produced within the cells and which are toxic to biological systems. This Zea mays (Maize) protein is Superoxide dismutase [Cu-Zn] 4AP (SODCC.2).